A 177-amino-acid polypeptide reads, in one-letter code: Peptide methionine sulfoxide reductase MsrA (177 aa).

Cys-11 is an active-site residue.

The protein belongs to the MsrA Met sulfoxide reductase family.

It catalyses the reaction L-methionyl-[protein] + [thioredoxin]-disulfide + H2O = L-methionyl-(S)-S-oxide-[protein] + [thioredoxin]-dithiol. The enzyme catalyses [thioredoxin]-disulfide + L-methionine + H2O = L-methionine (S)-S-oxide + [thioredoxin]-dithiol. In terms of biological role, has an important function as a repair enzyme for proteins that have been inactivated by oxidation. Catalyzes the reversible oxidation-reduction of methionine sulfoxide in proteins to methionine. The sequence is that of Peptide methionine sulfoxide reductase MsrA from Picrophilus torridus (strain ATCC 700027 / DSM 9790 / JCM 10055 / NBRC 100828 / KAW 2/3).